Here is a 316-residue protein sequence, read N- to C-terminus: Probable cell division protein WhiA (316 aa).

Residues 274 to 308 (SLKELGEMVSTGVISKSGVNHRLRKIDEIAEKLRN) constitute a DNA-binding region (H-T-H motif).

It belongs to the WhiA family.

In terms of biological role, involved in cell division and chromosome segregation. The polypeptide is Probable cell division protein WhiA (Macrococcus caseolyticus (strain JCSC5402) (Macrococcoides caseolyticum)).